The sequence spans 148 residues: Lysozyme C (148 aa).

The first 18 residues, 1–18 (MKALIVLGLVLLSVTVQG), serve as a signal peptide directing secretion. In terms of domain architecture, C-type lysozyme spans 19-148 (KVFERCELAR…VRQYVQGCGV (130 aa)). Cystine bridges form between Cys-24/Cys-146, Cys-48/Cys-134, Cys-83/Cys-99, and Cys-95/Cys-113. Catalysis depends on residues Glu-53 and Asp-71.

This sequence belongs to the glycosyl hydrolase 22 family. As to quaternary structure, monomer.

The protein resides in the secreted. The catalysed reaction is Hydrolysis of (1-&gt;4)-beta-linkages between N-acetylmuramic acid and N-acetyl-D-glucosamine residues in a peptidoglycan and between N-acetyl-D-glucosamine residues in chitodextrins.. Functionally, lysozymes have primarily a bacteriolytic function; those in tissues and body fluids are associated with the monocyte-macrophage system and enhance the activity of immunoagents. The chain is Lysozyme C (LYZ) from Homo sapiens (Human).